The sequence spans 197 residues: Segregation and condensation protein B (197 aa).

The protein belongs to the ScpB family. As to quaternary structure, homodimer. Homodimerization may be required to stabilize the binding of ScpA to the Smc head domains. Component of a cohesin-like complex composed of ScpA, ScpB and the Smc homodimer, in which ScpA and ScpB bind to the head domain of Smc. The presence of the three proteins is required for the association of the complex with DNA.

Its subcellular location is the cytoplasm. In terms of biological role, participates in chromosomal partition during cell division. May act via the formation of a condensin-like complex containing Smc and ScpA that pull DNA away from mid-cell into both cell halves. In Halalkalibacterium halodurans (strain ATCC BAA-125 / DSM 18197 / FERM 7344 / JCM 9153 / C-125) (Bacillus halodurans), this protein is Segregation and condensation protein B.